A 490-amino-acid polypeptide reads, in one-letter code: Sphingomyelinase (490 aa).

A signal peptide spans 1-31; that stretch reads MDYAKRIGQVGALAVVLGVGAAVTTHAIGSA. The segment at 30 to 49 is disordered; the sequence is SAAPTDPSSSSTDSPVDACS. The Periplasmic portion of the chain corresponds to 32 to 136; the sequence is APTDPSSSST…FDACDPDGNR (105 aa). A beta stranded transmembrane segment spans residues 137 to 145; sequence MTFAVRERG. Residues 146 to 161 are Extracellular-facing; the sequence is APGGPQHGIVTVDQRT. A beta stranded membrane pass occupies residues 162 to 168; that stretch reads ASFIYTA. At 169 to 171 the chain is on the periplasmic side; that stretch reads DPG. A beta stranded transmembrane segment spans residues 172 to 182; sequence FVGTDTFSVNV. Residues 183-187 lie on the Extracellular side of the membrane; it reads SDDTS. The chain crosses the membrane as a beta stranded span at residues 188–196; sequence LHVHGLAGY. Topologically, residues 197-204 are periplasmic; sequence LGPFHGHD. The beta stranded transmembrane segment at 205–213 threads the bilayer; the sequence is DVATVTVFV. The Extracellular portion of the chain corresponds to 214–490; sequence GNTPTDTISG…HYVADNVAVR (277 aa).

The protein belongs to the SpmT family.

It localises to the cell outer membrane. The catalysed reaction is a sphingomyelin + H2O = phosphocholine + an N-acylsphing-4-enine + H(+). Its function is as follows. Catalyzes the cleavage of sphingomyelin, a major lipid in eukaryotic cells, into ceramide and phosphocholine, which are then utilized by M.bovis as carbon, nitrogen and phosphorus sources, respectively. Thus, enables M.bovis to utilize sphingomyelin as a source of several essential nutrients for intracellular growth during infection. Furthermore, lyses erythrocytes and constitutes a hemolytic factor. The sequence is that of Sphingomyelinase from Mycobacterium bovis (strain ATCC BAA-935 / AF2122/97).